The following is a 71-amino-acid chain: Protein DP71L (71 aa).

Important for host CHOP inhibition stretches follow at residues Val16–Phe18 and Leu57–Leu61.

The protein belongs to the asfivirus DP71L family. Interacts (via C-terminus) with host PPP1CB.

Functionally, interacts with the host phosphatase PP1 catalytic subunit (PPP1CB) and recruits it to dephosphorylate EIF2S1/eIF2alpha and therefore restores the host translation that has been shut-down by the host. Also inhibits the EIF2S1/eIF2alpha-ATF4-DDIT3/CHOP pathway. In Ornithodoros (relapsing fever ticks), this protein is Protein DP71L.